Reading from the N-terminus, the 246-residue chain is MKQQEVRQRAFAMPLTSPAFPPGPYRFVNREYMIITYRTDPAAIEAVLPEPLQMAEPVVRYEFIRMPDSTGFGDYSESGQVIPVTFRGERGSYTLAMFLDDQPPLAGGRELWGFPKKAGKPRLEVHQDTLVGSLDFGPVRIATGTMGYKYEALDRSALLASLAEPNFLLKIIPHVDGSPRICELVRYHTTDVAIKGAWSAPGSLELHPHALAPVAALPVLEVLSARHFVCDLTLDLGTVVFDYLRQ.

Residue K116 is the Schiff-base intermediate with acetoacetate of the active site.

The protein belongs to the ADC family. In terms of assembly, homododecamer.

It catalyses the reaction acetoacetate + H(+) = acetone + CO2. Catalyzes the conversion of acetoacetate to acetone and carbon dioxide. This chain is Acetoacetate decarboxylase, found in Chromobacterium violaceum (strain ATCC 12472 / DSM 30191 / JCM 1249 / CCUG 213 / NBRC 12614 / NCIMB 9131 / NCTC 9757 / MK).